We begin with the raw amino-acid sequence, 374 residues long: MAKRDYYEVLGVSKTSTEQEIKSAYRKLAKKYHPDMNKESGAEEKFKEVNEAASVLLDADKKAKYDQFGHAAFDGSSGFGGSGFGGFEDFFSNMGGGMDFGDIFSDLFGGGRSGRSSRRGPSKGQDIGLEATLTFKELVFGVNKKTILNLVKTCTKCDGVGAENPSDVHICTKCNGAGQIIVNKQMGPFQVQNQVTCDKCNGVGKEFKSKCKNCHGKGVESKREEVEIPLPKGLWPGQQFVMRGKGHASLEGGIPGDLYITIGIVKSDVFELIPNSNDLIMNYNISYLDAILGNEVIIKTLDGPVRLKIPKGVYSGQLIKVHDKGLYKNQTSDKRGDLLIKISISIPTSVSKEEKKILKELEQLSNFEPKNIID.

A J domain is found at 5–69; the sequence is DYYEVLGVSK…DKKAKYDQFG (65 aa). The segment at 141-223 adopts a CR-type zinc-finger fold; the sequence is GVNKKTILNL…CHGKGVESKR (83 aa). Zn(2+) contacts are provided by Cys-154, Cys-157, Cys-171, Cys-174, Cys-197, Cys-200, Cys-211, and Cys-214. CXXCXGXG motif repeat units follow at residues 154 to 161, 171 to 178, 197 to 204, and 211 to 218; these read CTKCDGVG, CTKCNGAG, CDKCNGVG, and CKNCHGKG.

This sequence belongs to the DnaJ family. Homodimer. The cofactor is Zn(2+).

It localises to the cytoplasm. Its function is as follows. Participates actively in the response to hyperosmotic and heat shock by preventing the aggregation of stress-denatured proteins and by disaggregating proteins, also in an autonomous, DnaK-independent fashion. Unfolded proteins bind initially to DnaJ; upon interaction with the DnaJ-bound protein, DnaK hydrolyzes its bound ATP, resulting in the formation of a stable complex. GrpE releases ADP from DnaK; ATP binding to DnaK triggers the release of the substrate protein, thus completing the reaction cycle. Several rounds of ATP-dependent interactions between DnaJ, DnaK and GrpE are required for fully efficient folding. Also involved, together with DnaK and GrpE, in the DNA replication of plasmids through activation of initiation proteins. The polypeptide is Chaperone protein DnaJ (Mesoplasma florum (strain ATCC 33453 / NBRC 100688 / NCTC 11704 / L1) (Acholeplasma florum)).